Reading from the N-terminus, the 382-residue chain is Mannitol-1-phosphate 5-dehydrogenase (382 aa).

3 to 14 is a binding site for NAD(+); that stretch reads ALHFGAGNIGRG.

It belongs to the mannitol dehydrogenase family.

The catalysed reaction is D-mannitol 1-phosphate + NAD(+) = beta-D-fructose 6-phosphate + NADH + H(+). The sequence is that of Mannitol-1-phosphate 5-dehydrogenase from Tolumonas auensis (strain DSM 9187 / NBRC 110442 / TA 4).